Reading from the N-terminus, the 20-residue chain is Major extrapallial fluid protein (20 aa).

Residues 1 to 20 (NPVDDHHDDHHDAPIVEHHD) form a disordered region.

As to quaternary structure, homodimer. In terms of processing, glycosylated.

Appears to be a building block of the soluble organic matrix of the shell. The protein binds calcium. The protein is Major extrapallial fluid protein of Mytilus edulis (Blue mussel).